A 581-amino-acid chain; its full sequence is MEVKEAGYVGEIYRISGPLVVAEGLKARMYDLCKVGEEGLMGEVVGLVGQKVLIQVYEDTEGVKPGDKVENTGMPLSVELGPGLIRNIYDGVQRPLPVLKEVSGDFIGRGIEAPGLDRKAKWEFKPLVKKGEKVKPGEIIGTVQETEVVEQKILVPPNVKEGVIAEIYEGSFTVEDTIAVLEDGTELKLYHKWPVRIPRPYVEKLPPVVPLITGQRILDTFFPVAKGGTAAIPGPFGSGKTVTQHQLAKWSDAQIVVYIGCGERGNEMTEVLEEFPELEDPRTGKPLMERTVLVANTSNMPVAAREASVYTGITIAEYFRDMGYDVAIQADSTSRWAEAMREISGRLEEMPGEEGYPAYLASRLAEFYERAGRVKTLAGNIGSVTVVGAVSPPGGDFSEPVTQNTLRIVKVFWALDAKLAARRHFPAINWLQSYSLYVDTLKDWFAENVSEEWNELRRWAMEVLQEEANLQEIVQLVGSDALPESQRVLLEVARIIREVYLIQYAYHPVDTYCSVQKQYDMLKAIKQINDWFYQALEAGKTIDEIAGVEGLEEFARAKFEEDYKPAMEAALEKIRKNLLGE.

Gly234–Thr241 contributes to the ATP binding site.

It belongs to the ATPase alpha/beta chains family. Has multiple subunits with at least A(3), B(3), C, D, E, F, H, I and proteolipid K(x).

The protein resides in the cell membrane. It catalyses the reaction ATP + H2O + 4 H(+)(in) = ADP + phosphate + 5 H(+)(out). Component of the A-type ATP synthase that produces ATP from ADP in the presence of a proton gradient across the membrane. The A chain is the catalytic subunit. This Archaeoglobus fulgidus (strain ATCC 49558 / DSM 4304 / JCM 9628 / NBRC 100126 / VC-16) protein is A-type ATP synthase subunit A.